The chain runs to 620 residues: Probable potassium transport system protein Kup (620 aa).

Transmembrane regions (helical) follow at residues 7–27, 44–64, 98–118, 135–155, 166–186, 201–221, 245–265, 278–298, 335–355, 361–381, 394–414, and 417–437; these read LALAALGVVFGDIGTSPLYAI, VFGVLSLLVWSLLLIVSLKYL, FFLIAIGLFGAALLYGDGMIT, PAFHDLIIPATVTVLVILFLF, LFGPVILLWFVVLGVLGLVEI, GIMFLLNNQLHGFMVLGAVFL, WAFLVLPALLLNYFGQGALLL, LVPSWGLIPMVILSTSATIIA, IYVPAANWSLMVATISLVIGF, LAAAYGVAVTATMLISTILFY, VLNVMIVVFLLVDLAFFGASA, and LFHGAWFPLVIAAVMFTVMMT.

This sequence belongs to the HAK/KUP transporter (TC 2.A.72) family.

Its subcellular location is the cell inner membrane. The catalysed reaction is K(+)(in) + H(+)(in) = K(+)(out) + H(+)(out). Its function is as follows. Transport of potassium into the cell. Likely operates as a K(+):H(+) symporter. The protein is Probable potassium transport system protein Kup of Chlorobium chlorochromatii (strain CaD3).